Reading from the N-terminus, the 432-residue chain is Amino-acid acetyltransferase (432 aa).

One can recognise an N-acetyltransferase domain in the interval 286–425 (EKLREATIED…ASLYNYQRQS (140 aa)).

This sequence belongs to the acetyltransferase family. ArgA subfamily.

The protein resides in the cytoplasm. It catalyses the reaction L-glutamate + acetyl-CoA = N-acetyl-L-glutamate + CoA + H(+). The protein operates within amino-acid biosynthesis; L-arginine biosynthesis; N(2)-acetyl-L-ornithine from L-glutamate: step 1/4. The chain is Amino-acid acetyltransferase from Azotobacter vinelandii (strain DJ / ATCC BAA-1303).